The primary structure comprises 492 residues: Phosphoenolpyruvate carboxylase (492 aa).

The protein belongs to the PEPCase type 2 family. In terms of assembly, homotetramer. Requires Mg(2+) as cofactor.

It carries out the reaction oxaloacetate + phosphate = phosphoenolpyruvate + hydrogencarbonate. Functionally, catalyzes the irreversible beta-carboxylation of phosphoenolpyruvate (PEP) to form oxaloacetate (OAA), a four-carbon dicarboxylic acid source for the tricarboxylic acid cycle. This Halobacterium salinarum (strain ATCC 29341 / DSM 671 / R1) protein is Phosphoenolpyruvate carboxylase.